The primary structure comprises 297 residues: N-acetylneuraminate lyase (297 aa).

Aceneuramate-binding residues include Ser47 and Thr48. Tyr137 acts as the Proton donor in catalysis. Lys165 functions as the Schiff-base intermediate with substrate in the catalytic mechanism. Aceneuramate contacts are provided by Thr167, Gly189, Asp191, Glu192, and Ser208.

Belongs to the DapA family. NanA subfamily. As to quaternary structure, homotetramer.

The protein resides in the cytoplasm. The catalysed reaction is aceneuramate = aldehydo-N-acetyl-D-mannosamine + pyruvate. The protein operates within amino-sugar metabolism; N-acetylneuraminate degradation; D-fructose 6-phosphate from N-acetylneuraminate: step 1/5. In terms of biological role, catalyzes the reversible aldol cleavage of N-acetylneuraminic acid (sialic acid; Neu5Ac) to form pyruvate and N-acetylmannosamine (ManNAc) via a Schiff base intermediate. The chain is N-acetylneuraminate lyase from Escherichia fergusonii (strain ATCC 35469 / DSM 13698 / CCUG 18766 / IAM 14443 / JCM 21226 / LMG 7866 / NBRC 102419 / NCTC 12128 / CDC 0568-73).